A 565-amino-acid polypeptide reads, in one-letter code: MADYSGESGLLSCESCDMVFRSWALLATHTKRFCIGRLTPEVTLKSQPSVAIKRGTKIMAQEKSRDQEASTSALKRLTEETAGSPGERLRVLQGTRARRMAETEAQSRALERRGEELKRRLHSVAGPKGGLPRPFDLERELRELKEEANRTRGALQTLGAHFQALQLQPRKLQDTHRAVEFCYLPLRFNPETLAAEIRILREAYVHGGGRDPEVLDKILQLQVEASALELQRSQNRKEKLSAASEEVLTVEAENRLLEAEILALQKQKVLSLSPWGSRDLPGHLSRCDNSLLPPLVAPPIPQLTSSTKAQNFHGTSKTILNGTMTRKMGLDLHFLLPASDVLGPAPYDPGAGLVIFYDFLRGLDTSWIWVQLMTSLARNGQDTGGTTALPPALCLPQPSAPGPMGNCAILASKQPVPRLPPSPLVSLICELQAWHGVTWAPQPKAWASLLLFDQDLRVLRGRWRLPLRVYPNTSLSLAQRNEIPQAGQAELFLRLVNARDTDAQTLAEINPANAHEYQYPPMVSSSSVESSFFTHSSAFADPPPPTEEAFVSVKDKNEHLSPHQF.

Residues 58 to 87 are disordered; the sequence is IMAQEKSRDQEASTSALKRLTEETAGSPGE. Coiled-coil stretches lie at residues 97 to 160 and 219 to 271; these read ARRM…TLGA and LQLQ…KVLS.

This is Coiled-coil domain-containing protein 17 (Ccdc17) from Mus musculus (Mouse).